A 147-amino-acid chain; its full sequence is Ribonuclease H (147 aa).

The 143-residue stretch at 3-145 (TEDRVEIYTD…ADQLANKGVE (143 aa)) folds into the RNase H type-1 domain. The Mg(2+) site is built by aspartate 12, glutamate 50, aspartate 72, and aspartate 137.

This sequence belongs to the RNase H family. Monomer. It depends on Mg(2+) as a cofactor.

The protein resides in the cytoplasm. It carries out the reaction Endonucleolytic cleavage to 5'-phosphomonoester.. In terms of biological role, endonuclease that specifically degrades the RNA of RNA-DNA hybrids. The polypeptide is Ribonuclease H (Chromobacterium violaceum (strain ATCC 12472 / DSM 30191 / JCM 1249 / CCUG 213 / NBRC 12614 / NCIMB 9131 / NCTC 9757 / MK)).